Here is a 694-residue protein sequence, read N- to C-terminus: ATP-dependent RNA helicase DHX33 (694 aa).

A Helicase ATP-binding domain is found at 78 to 246 (LKELEANDTV…FNCKGMYLEG (169 aa)). 91–98 (SETGSGKT) contributes to the ATP binding site. Residues 188-191 (DEAH) carry the DEAH box motif. One can recognise a Helicase C-terminal domain in the interval 270 to 443 (TLFHIHRTTP…SMVLQLLALD (174 aa)).

Belongs to the DEAD box helicase family. DEAH subfamily.

The protein resides in the nucleus. Its subcellular location is the nucleolus. The enzyme catalyses ATP + H2O = ADP + phosphate + H(+). Its function is as follows. Part of a translational control module, also containing pths/DDX47 and ais/DDX52, which coordinates germline stem cell differentiation with ribosome biogenesis during oogenesis. This module allows for coregulation of ribosomal proteins and non1/GTPBP4, a p53 repressor, preventing p53 stabilization, cell cycle arrest and loss of stem cell differentiation. The chain is ATP-dependent RNA helicase DHX33 from Drosophila melanogaster (Fruit fly).